A 348-amino-acid polypeptide reads, in one-letter code: Thioesterase-like protein TwmA (348 aa).

It participates in secondary metabolite biosynthesis. Functionally, thioesterase-like protein; part of the gene cluster that mediates the biosynthesis of wortmanamides A and B, reduced long-chain polyketides amidated with a specific omega-amino acid, 5-aminopentanoic acid (5PA). The PKS modules of TwmB are involved in the synthesis of the polyketide backbone, whereas the non-canonical C domain of TwmB is a bonafide condensation domain that specifically selects 5PA and catalyzes amidation to release polyketide chain. The C domain clearly prefers C16 and C18 fatty acyl substrates, which is consistent with simultaneous formation of both octaketide and nonaketide acyl amides wortmanamides A and B. Because TwmB lacks a designated enoylreductase (ER) domain, the required activity is provided the enoyl reductase TwmE. The roles of the remaining enzymes have still to be clarified. This is Thioesterase-like protein TwmA from Talaromyces wortmannii (Penicillium wortmannii).